Consider the following 169-residue polypeptide: Lipoprotein signal peptidase (169 aa).

Helical transmembrane passes span 4–24 (PICS…ILDI), 29–49 (WVMA…FNLT), 70–90 (WFFA…MYRS), and 101–121 (YALI…HGAV). Residues Asp123 and Asp141 contribute to the active site. Residues 137 to 157 (FNLADVAICIGAALVIFEGFL) form a helical membrane-spanning segment.

Belongs to the peptidase A8 family.

It localises to the cell inner membrane. It catalyses the reaction Release of signal peptides from bacterial membrane prolipoproteins. Hydrolyzes -Xaa-Yaa-Zaa-|-(S,diacylglyceryl)Cys-, in which Xaa is hydrophobic (preferably Leu), and Yaa (Ala or Ser) and Zaa (Gly or Ala) have small, neutral side chains.. Its pathway is protein modification; lipoprotein biosynthesis (signal peptide cleavage). This protein specifically catalyzes the removal of signal peptides from prolipoproteins. In Yersinia pestis bv. Antiqua (strain Antiqua), this protein is Lipoprotein signal peptidase.